The sequence spans 260 residues: Pectate lyase H (260 aa).

An N-terminal signal peptide occupies residues 1-17; the sequence is MFIKNGLLLSLATSVLA.

Belongs to the polysaccharide lyase 3 family. It depends on Ca(2+) as a cofactor.

It localises to the secreted. The catalysed reaction is Eliminative cleavage of (1-&gt;4)-alpha-D-galacturonan to give oligosaccharides with 4-deoxy-alpha-D-galact-4-enuronosyl groups at their non-reducing ends.. Functionally, pectinolytic enzyme consist of four classes of enzymes: pectin lyase, polygalacturonase, pectin methylesterase and rhamnogalacturonase. Among pectinolytic enzymes, pectin lyase is the most important in depolymerization of pectin, since it cleaves internal glycosidic bonds of highly methylated pectins. Favors pectate, the anion, over pectin, the methyl ester. This chain is Pectate lyase H (plyH), found in Emericella nidulans (strain FGSC A4 / ATCC 38163 / CBS 112.46 / NRRL 194 / M139) (Aspergillus nidulans).